The chain runs to 103 residues: MATVTLNVKTVRPLGERVLVKVSQSEEKTAGGILLPDTVKEKPQIGEIIAEGPGRRNDDGSFQPLEVTVNSKVLYSKYAGTDIKLENEEYVLLSEKDILAIIA.

The protein belongs to the GroES chaperonin family. As to quaternary structure, heptamer of 7 subunits arranged in a ring. Interacts with the chaperonin GroEL.

The protein resides in the plastid. Its subcellular location is the cyanelle. Together with the chaperonin GroEL, plays an essential role in assisting protein folding. The GroEL-GroES system forms a nano-cage that allows encapsulation of the non-native substrate proteins and provides a physical environment optimized to promote and accelerate protein folding. GroES binds to the apical surface of the GroEL ring, thereby capping the opening of the GroEL channel. The chain is Co-chaperonin GroES from Cyanophora paradoxa.